The following is a 256-amino-acid chain: MLSRVVLSAAATAAPSLKNAAFLGPGVLQATRTFHTGQPHLVPVPPLPEYGGKVRYGLIPEEFFQFLYPKTGVTGPYVLGTGLILYALSKEIYVISAETFTALSVLGVMVYGIKKYGPFVADFADKLNEQKLAQLEEAKQASIQHIQNAIDTEKSQQALVQKRHYLFDVQRNNIAMALEVTYRERLYRVYKEVKNRLDYHISVQNMMRRKEQEHMINWVEKHVVQSISTQQEKETIAKCIADLKLLAKKAQAQPVM.

The N-terminal 42 residues, 1 to 42, are a transit peptide targeting the mitochondrion; the sequence is MLSRVVLSAAATAAPSLKNAAFLGPGVLQATRTFHTGQPHLV. Lysine 131 bears the N6-succinyllysine mark. Residues lysine 139, lysine 154, lysine 162, lysine 221, lysine 233, and lysine 244 each carry the N6-acetyllysine modification.

The protein belongs to the eukaryotic ATPase B chain family. As to quaternary structure, component of the ATP synthase complex composed at least of ATP5F1A/subunit alpha, ATP5F1B/subunit beta, ATP5MC1/subunit c (homooctomer), MT-ATP6/subunit a, MT-ATP8/subunit 8, ATP5ME/subunit e, ATP5MF/subunit f, ATP5MG/subunit g, ATP5MK/subunit k, ATP5MJ/subunit j, ATP5F1C/subunit gamma, ATP5F1D/subunit delta, ATP5F1E/subunit epsilon, ATP5PF/subunit F6, ATP5PB/subunit b, ATP5PD/subunit d, ATP5PO/subunit OSCP. ATP synthase complex consists of a soluble F(1) head domain (subunits alpha(3) and beta(3)) - the catalytic core - and a membrane F(0) domain - the membrane proton channel (subunits c, a, 8, e, f, g, k and j). These two domains are linked by a central stalk (subunits gamma, delta, and epsilon) rotating inside the F1 region and a stationary peripheral stalk (subunits F6, b, d, and OSCP).

The protein resides in the mitochondrion. The protein localises to the mitochondrion inner membrane. Functionally, subunit b, of the mitochondrial membrane ATP synthase complex (F(1)F(0) ATP synthase or Complex V) that produces ATP from ADP in the presence of a proton gradient across the membrane which is generated by electron transport complexes of the respiratory chain. ATP synthase complex consist of a soluble F(1) head domain - the catalytic core - and a membrane F(1) domain - the membrane proton channel. These two domains are linked by a central stalk rotating inside the F(1) region and a stationary peripheral stalk. During catalysis, ATP synthesis in the catalytic domain of F(1) is coupled via a rotary mechanism of the central stalk subunits to proton translocation. In vivo, can only synthesize ATP although its ATP hydrolase activity can be activated artificially in vitro. Part of the complex F(0) domain. Part of the complex F(0) domain and the peripheric stalk, which acts as a stator to hold the catalytic alpha(3)beta(3) subcomplex and subunit a/ATP6 static relative to the rotary elements. The protein is ATP synthase peripheral stalk subunit b, mitochondrial of Homo sapiens (Human).